Reading from the N-terminus, the 900-residue chain is Sterol regulatory element-binding protein 1 (900 aa).

The span at Met-1–Ala-16 shows a compositional bias: low complexity. Disordered regions lie at residues Met-1 to Ser-49 and Thr-206 to Thr-263. The interval Met-1 to Pro-440 is nuclear form of sre1; complements deletions of sre1 or scp1. The Cytoplasmic segment spans residues Met-1–Thr-442. A compositionally biased stretch (polar residues) spans Thr-21–Ser-32. Positions Ala-35 to Ser-49 are enriched in low complexity. Residues Pro-260–Leu-332 enclose the bHLH domain. The helical transmembrane segment at Gly-443–Leu-463 threads the bilayer. Topologically, residues His-464–Ser-509 are lumenal. The helical transmembrane segment at Thr-510–Thr-530 threads the bilayer. The Cytoplasmic segment spans residues His-531 to Ala-900. Phosphoserine is present on residues Ser-898 and Ser-899.

As to quaternary structure, forms a tight complex with scp1, composed of 4 copies of scp1 and 4 copies of sre1, which protects sre1 precursor from degradation by the proteasome. Post-translationally, in low oxygen or sterol conditions, undergoes proteolytic cleavage by rhomboid-type protease rbd2 and is released as soluble transcription factor from the membrane. In terms of processing, processed form is phosphorylated.

Its subcellular location is the endoplasmic reticulum membrane. The protein resides in the nucleus. In terms of biological role, precursor of the transcription factor form (Processed sterol regulatory element-binding protein 1), which is embedded in the endoplasmic reticulum membrane. Low oxygen or sterol conditions promote processing of this form, releasing the transcription factor form that translocates into the nucleus and activates transcription of genes required for adaptation to anaerobic growth. Its function is as follows. Transcriptional activator required for transcription of genes required for adaptation to anaerobic growth like those implicated in the nonrespiratory oxygen-consumptive biosynthetic pathways of sterol, heme, sphingolipid, and ubiquinone biosynthesis. May monitor oxygen levels through sterol synthesis steps which require oxygen. The protein is Sterol regulatory element-binding protein 1 of Schizosaccharomyces pombe (strain 972 / ATCC 24843) (Fission yeast).